We begin with the raw amino-acid sequence, 700 residues long: ATP-dependent zinc metalloprotease FtsH (700 aa).

At 1 to 20 (MSSDNGSGRQGGDRGGSTGY) the chain is on the cytoplasmic side. A helical transmembrane segment spans residues 21 to 41 (NLLMYLGFGAIIATLVALYVL). Over 42 to 171 (QMFQTSLDYT…FRHADPPGPW (130 aa)) the chain is Periplasmic. A helical transmembrane segment spans residues 172-192 (EQHSQLIIGMLLAAMLIYIVV). Topologically, residues 193 to 700 (RRLSAAGSPM…ITAPATERSG (508 aa)) are cytoplasmic. Residue 262–269 (GPPGTGKT) participates in ATP binding. H484 is a binding site for Zn(2+). The active site involves E485. Zn(2+) is bound by residues H488 and D561.

It in the central section; belongs to the AAA ATPase family. In the C-terminal section; belongs to the peptidase M41 family. In terms of assembly, homohexamer. The cofactor is Zn(2+).

Its subcellular location is the cell inner membrane. In terms of biological role, acts as a processive, ATP-dependent zinc metallopeptidase for both cytoplasmic and membrane proteins. Plays a role in the quality control of integral membrane proteins. In Pirellula staleyi (strain ATCC 27377 / DSM 6068 / ICPB 4128) (Pirella staleyi), this protein is ATP-dependent zinc metalloprotease FtsH.